Consider the following 856-residue polypeptide: Dual specificity protein kinase TTK (856 aa).

M1 bears the N-acetylmethionine mark. T32 is modified (phosphothreonine). 3 positions are modified to phosphoserine: S36, S277, and S342. T380 bears the Phosphothreonine mark. Phosphoserine is present on residues S383, S435, and S454. One can recognise a Protein kinase domain in the interval 524–790 (YSILKQIGSG…IPELLTHPYV (267 aa)). ATP-binding positions include 530–538 (IGSGGSSKV) and K552. Catalysis depends on D646, which acts as the Proton acceptor. S820 is modified (phosphoserine). Positions 837–856 (CGEGQDSSSSKTFDKKRERK) are disordered.

It belongs to the protein kinase superfamily. Ser/Thr protein kinase family. In terms of assembly, interacts with TPR; the interactions occurs in a microtubule-independent manner. Interacts with MAD1L1 and MAD2L1. In terms of processing, autophosphorylated. As to expression, present in rapidly proliferating cell lines; high levels in testis, bone marrow, spleen and thymus. Low levels in brain, heart, lung and kidney.

It carries out the reaction L-seryl-[protein] + ATP = O-phospho-L-seryl-[protein] + ADP + H(+). The enzyme catalyses L-threonyl-[protein] + ATP = O-phospho-L-threonyl-[protein] + ADP + H(+). It catalyses the reaction L-tyrosyl-[protein] + ATP = O-phospho-L-tyrosyl-[protein] + ADP + H(+). Inhibited by the ATP-competitive kinase inhibitor, SP600125. Involved in mitotic spindle assembly checkpoint signaling, a process that delays anaphase until chromosomes are bioriented on the spindle, and in the repair of incorrect mitotic kinetochore-spindle microtubule attachments. Phosphorylates MAD1L1 to promote the mitotic spindle assembly checkpoint. Phosphorylates CDCA8/Borealin leading to enhanced AURKB activity at the kinetochore. Phosphorylates SKA3 at 'Ser-34' leading to dissociation of the SKA complex from microtubules and destabilization of microtubule-kinetochore attachments. Phosphorylates KNL1, KNTC1 and autophosphorylates. Phosphorylates MCRS1 which enhances recruitment of KIF2A to the minus end of spindle microtubules and promotes chromosome alignment. The protein is Dual specificity protein kinase TTK (Ttk) of Mus musculus (Mouse).